A 236-amino-acid chain; its full sequence is Phosphoribosylaminoimidazole-succinocarboxamide synthase (236 aa).

Belongs to the SAICAR synthetase family.

The enzyme catalyses 5-amino-1-(5-phospho-D-ribosyl)imidazole-4-carboxylate + L-aspartate + ATP = (2S)-2-[5-amino-1-(5-phospho-beta-D-ribosyl)imidazole-4-carboxamido]succinate + ADP + phosphate + 2 H(+). It participates in purine metabolism; IMP biosynthesis via de novo pathway; 5-amino-1-(5-phospho-D-ribosyl)imidazole-4-carboxamide from 5-amino-1-(5-phospho-D-ribosyl)imidazole-4-carboxylate: step 1/2. The chain is Phosphoribosylaminoimidazole-succinocarboxamide synthase from Akkermansia muciniphila (strain ATCC BAA-835 / DSM 22959 / JCM 33894 / BCRC 81048 / CCUG 64013 / CIP 107961 / Muc).